Consider the following 413-residue polypeptide: DNA primase large subunit PriL (413 aa).

Positions 230, 301, 310, and 317 each coordinate [4Fe-4S] cluster. Composition is skewed to basic and acidic residues over residues 340-356, 362-381, and 388-413; these read MEKEKEEKEEKEKQEEK, KEKQEEIKKKKKKEKQEEKG, and KKRERKQEKETKRREGKEKQEEKKRI. Positions 340 to 413 are disordered; sequence MEKEKEEKEE…KEKQEEKKRI (74 aa).

It belongs to the eukaryotic-type primase large subunit family. As to quaternary structure, heterodimer of a small subunit (PriS) and a large subunit (PriL). [4Fe-4S] cluster is required as a cofactor.

Regulatory subunit of DNA primase, an RNA polymerase that catalyzes the synthesis of short RNA molecules used as primers for DNA polymerase during DNA replication. Stabilizes and modulates the activity of the small subunit, increasing the rate of DNA synthesis, and conferring RNA synthesis capability. The DNA polymerase activity may enable DNA primase to also catalyze primer extension after primer synthesis. May also play a role in DNA repair. The polypeptide is DNA primase large subunit PriL (Methanosarcina barkeri (strain Fusaro / DSM 804)).